A 382-amino-acid polypeptide reads, in one-letter code: Succinate--CoA ligase [ADP-forming] subunit beta (382 aa).

An ATP-grasp domain is found at 9-240; it reads KELLKKYGLP…ITQIDPLEVE (232 aa). ATP contacts are provided by Lys-46, Glu-98, Thr-101, and Glu-106. Positions 195 and 209 each coordinate Mg(2+). Residues Asn-260 and 317–319 contribute to the substrate site; that span reads GIL.

Belongs to the succinate/malate CoA ligase beta subunit family. In terms of assembly, heterotetramer of two alpha and two beta subunits. Mg(2+) is required as a cofactor.

The enzyme catalyses succinate + ATP + CoA = succinyl-CoA + ADP + phosphate. It carries out the reaction GTP + succinate + CoA = succinyl-CoA + GDP + phosphate. It participates in carbohydrate metabolism; tricarboxylic acid cycle; succinate from succinyl-CoA (ligase route): step 1/1. Succinyl-CoA synthetase functions in the citric acid cycle (TCA), coupling the hydrolysis of succinyl-CoA to the synthesis of either ATP or GTP and thus represents the only step of substrate-level phosphorylation in the TCA. The beta subunit provides nucleotide specificity of the enzyme and binds the substrate succinate, while the binding sites for coenzyme A and phosphate are found in the alpha subunit. In Hydrogenobaculum sp. (strain Y04AAS1), this protein is Succinate--CoA ligase [ADP-forming] subunit beta.